Reading from the N-terminus, the 428-residue chain is Enolase (428 aa).

Q165 is a binding site for (2R)-2-phosphoglycerate. The active-site Proton donor is the E207. Positions 244, 285, and 312 each coordinate Mg(2+). Positions 337, 366, 367, and 388 each coordinate (2R)-2-phosphoglycerate. The active-site Proton acceptor is K337.

The protein belongs to the enolase family. In terms of assembly, component of the RNA degradosome, a multiprotein complex involved in RNA processing and mRNA degradation. The cofactor is Mg(2+).

Its subcellular location is the cytoplasm. The protein resides in the secreted. The protein localises to the cell surface. The enzyme catalyses (2R)-2-phosphoglycerate = phosphoenolpyruvate + H2O. The protein operates within carbohydrate degradation; glycolysis; pyruvate from D-glyceraldehyde 3-phosphate: step 4/5. In terms of biological role, catalyzes the reversible conversion of 2-phosphoglycerate (2-PG) into phosphoenolpyruvate (PEP). It is essential for the degradation of carbohydrates via glycolysis. In Coxiella burnetii (strain Dugway 5J108-111), this protein is Enolase.